A 1098-amino-acid chain; its full sequence is Paired amphipathic helix protein Sin3b (1098 aa).

Positions M1–G25 are enriched in gly residues. Residues M1 to G26 are disordered. Residues M1 to F299 form an interaction with CRY1 region. 2 PAH domains span residues L30–G100 and V145–A230. An interaction with REST region spans residues P52–P98. The segment covering N238 to Q247 has biased composition (polar residues). Residues N238 to K274 form a disordered region. Positions K275 to Q499 are interaction with NCOR1. The PAH 3 domain occupies K283–K360. Residues A383–I550 are interaction with SUDS3 and HDAC1. Residues Q661–P702 are disordered. 2 positions are modified to phosphoserine: S667 and S670. Residues E673–P694 show a composition bias toward basic and acidic residues.

Component of the SIN3B complex, which includes SIN3B, HDAC2 or HDAC1, PHF12 and MORF4L1. Interacts with FOXK1/MNF, MXI, MAD, NCOR1 and SAP30. Interaction with SUDS3 enhances the interaction with HDAC1 to form a complex. Interacts with CRY1, HCFC1, MAD3, MAD4, MAEL, REST, RNF220 and SETDB1. Interacts with C6orf89. Interacts with MYT1L. In terms of processing, ubiquitinated by RNF220 that leads to proteasomal degradation.

The protein resides in the nucleus. Functionally, acts as a transcriptional repressor. Interacts with MXI1 to repress MYC responsive genes and antagonize MYC oncogenic activities. Interacts with MAD-MAX heterodimers by binding to MAD. The heterodimer then represses transcription by tethering SIN3B to DNA. Also forms a complex with FOXK1 which represses transcription. With FOXK1, regulates cell cycle progression probably by repressing cell cycle inhibitor genes expression. As part of the SIN3B complex represses transcription and counteracts the histone acetyltransferase activity of EP300 through the recognition H3K27ac marks by PHF12 and the activity of the histone deacetylase HDAC2. SIN3B complex is recruited downstream of the constitutively active genes transcriptional start sites through interaction with histones and mitigates histone acetylation and RNA polymerase II progression within transcribed regions contributing to the regulation of transcription. The polypeptide is Paired amphipathic helix protein Sin3b (Sin3b) (Mus musculus (Mouse)).